The following is a 512-amino-acid chain: Mesoderm induction early response protein 1 (512 aa).

Low complexity predominate over residues 1 to 16 (MAEPSVESSSPGGSAT). Disordered regions lie at residues 1–63 (MAEP…REGD) and 75–173 (YGST…EDYI). Ser10 carries the post-translational modification Phosphoserine. Positions 17-36 (SDDHEFDPSADMLVHDFDDE) are enriched in basic and acidic residues. Acidic residues-rich tracts occupy residues 37 to 46 (RTLEEEEMME) and 83 to 105 (EEDEEEEEEEEEGEDDEDADNDD). Residues 129 to 144 (QSSNDDPSQSVASQDA) are compositionally biased toward polar residues. Position 141 is a phosphoserine (Ser141). The residue at position 155 (Tyr155) is a Phosphotyrosine. Phosphoserine occurs at positions 160 and 166. Acidic residues predominate over residues 160 to 173 (SEVEEESEEDEDYI). The 99-residue stretch at 180–278 (KEIMVGSMFQ…EALRRLRFNV (99 aa)) folds into the ELM2 domain. The interval 180–284 (KEIMVGSMFQ…RFNVKAAREE (105 aa)) is interaction with HDAC1. A Glycyl lysine isopeptide (Lys-Gly) (interchain with G-Cter in SUMO2) cross-link involves residue Lys239. Residues 283–335 (EELSVWTEEECRNFEQGLKAYGKDFHLIQANKVRTRSVGECVAFYYMWKKSER) form the SANT domain. Residues 366–512 (ESESAASSRA…KFEELENTDD (147 aa)) form a disordered region. Ser367, Ser369, and Ser377 each carry phosphoserine. Over residues 396-409 (TVSTANQNGVSSNG) the composition is skewed to polar residues. Basic and acidic residues predominate over residues 414–423 (LNKEEVKVEG). Residue Lys420 forms a Glycyl lysine isopeptide (Lys-Gly) (interchain with G-Cter in SUMO2) linkage. Phosphothreonine is present on Thr448. A compositionally biased stretch (basic and acidic residues) spans 462–475 (ARNENDFDEKSERP). A compositionally biased stretch (polar residues) spans 482–494 (NSNGKESPGSSEF). Ser483, Ser488, and Ser491 each carry phosphoserine.

In terms of assembly, interacts with HDAC1. Part of a complex containing at least CDYL, MIER1, MIER2, HDAC1 and HDAC2. Ubiquitously expressed, but at very low levels. However, consistent level of expression are observed in heart, testis, thyroid, ovary and adrenal gland. Transcripts are up-regulated in breast carcinoma cell lines and tumor.

Its subcellular location is the nucleus. It is found in the cytoplasm. Transcriptional repressor regulating the expression of a number of genes including SP1 target genes. Probably functions through recruitment of HDAC1 a histone deacetylase involved in chromatin silencing. This Homo sapiens (Human) protein is Mesoderm induction early response protein 1 (MIER1).